A 412-amino-acid chain; its full sequence is Serine hydroxymethyltransferase (412 aa).

(6S)-5,6,7,8-tetrahydrofolate-binding positions include leucine 117 and 121–123 (GHL). Lysine 226 is modified (N6-(pyridoxal phosphate)lysine).

The protein belongs to the SHMT family. As to quaternary structure, homodimer. Pyridoxal 5'-phosphate is required as a cofactor.

It localises to the cytoplasm. The catalysed reaction is (6R)-5,10-methylene-5,6,7,8-tetrahydrofolate + glycine + H2O = (6S)-5,6,7,8-tetrahydrofolate + L-serine. It participates in one-carbon metabolism; tetrahydrofolate interconversion. It functions in the pathway amino-acid biosynthesis; glycine biosynthesis; glycine from L-serine: step 1/1. Its function is as follows. Catalyzes the reversible interconversion of serine and glycine with tetrahydrofolate (THF) serving as the one-carbon carrier. This reaction serves as the major source of one-carbon groups required for the biosynthesis of purines, thymidylate, methionine, and other important biomolecules. Also exhibits THF-independent aldolase activity toward beta-hydroxyamino acids, producing glycine and aldehydes, via a retro-aldol mechanism. The chain is Serine hydroxymethyltransferase from Staphylococcus aureus (strain USA300).